Consider the following 714-residue polypeptide: Zinc finger matrin-type protein 1 (714 aa).

Residues 89–119 (NFCKPCGVVLQHESERISHFESEIHAQNVKF) form a Matrin-type 1 zinc finger. The segment at 172-214 (HYVGKSHSPTQNQSLEEHDQVSPSTCSPKMDEPNTTPAPPPFL) is disordered. A Matrin-type 2 zinc finger spans residues 230 to 254 (YVCHICSITFTSLHMFRSHMQGTEH). Over residues 417 to 434 (RERVDSEHRQRPCEERFS) the composition is skewed to basic and acidic residues. Disordered stretches follow at residues 417 to 469 (RERV…NDDF) and 571 to 714 (MPAS…ILGF). 2 stretches are compositionally biased toward polar residues: residues 437–446 (APQTYQQEYS) and 575–588 (LSLS…SSYN). Over residues 609-619 (SHRRRRQKRKR) the composition is skewed to basic residues. 2 stretches are compositionally biased toward basic and acidic residues: residues 620 to 632 (HLEE…EKEQ) and 640 to 662 (SYQD…EDKA). A compositionally biased stretch (basic residues) spans 669–678 (TKHRRKKRKH).

Its subcellular location is the nucleus. The sequence is that of Zinc finger matrin-type protein 1 (Zmat1) from Mus musculus (Mouse).